Here is a 229-residue protein sequence, read N- to C-terminus: AA9 family lytic polysaccharide monooxygenase E (229 aa).

An N-terminal signal peptide occupies residues 1–19 (MRSSDITFVLLSVVATVRS). Histidine 20 lines the Cu(2+) pocket. Cysteine 57 and cysteine 178 are disulfide-bonded. An N-linked (GlcNAc...) asparagine glycan is attached at asparagine 76. Histidine 99 is a Cu(2+) binding site. O2 contacts are provided by histidine 164 and glutamine 173. Position 175 (tyrosine 175) interacts with Cu(2+). The N-linked (GlcNAc...) asparagine glycan is linked to asparagine 217.

It belongs to the polysaccharide monooxygenase AA9 family. The cofactor is Cu(2+).

The protein resides in the secreted. The catalysed reaction is [(1-&gt;4)-beta-D-glucosyl]n+m + reduced acceptor + O2 = 4-dehydro-beta-D-glucosyl-[(1-&gt;4)-beta-D-glucosyl]n-1 + [(1-&gt;4)-beta-D-glucosyl]m + acceptor + H2O.. In terms of biological role, lytic polysaccharide monooxygenase (LPMO) that depolymerizes crystalline and amorphous polysaccharides via the oxidation of scissile alpha- or beta-(1-4)-glycosidic bonds, yielding C1 and C4 oxidation products. Catalysis by LPMOs requires the reduction of the active-site copper from Cu(II) to Cu(I) by a reducing agent and H(2)O(2) or O(2) as a cosubstrate. This is AA9 family lytic polysaccharide monooxygenase E from Botryotinia fuckeliana (strain B05.10) (Noble rot fungus).